A 273-amino-acid chain; its full sequence is Large ribosomal subunit protein uL2cy (273 aa).

Disordered regions lie at residues 1–22 and 224–273; these read MAIH…DSQV and NPVD…RRRK.

It belongs to the universal ribosomal protein uL2 family. In terms of assembly, part of the 50S ribosomal subunit.

The protein localises to the plastid. The protein resides in the chloroplast. This chain is Large ribosomal subunit protein uL2cy (rpl2-B), found in Chloranthus spicatus (Chulantree).